Here is a 239-residue protein sequence, read N- to C-terminus: tRNA (guanine-N(1)-)-methyltransferase (239 aa).

Residues G112 and I132–L137 each bind S-adenosyl-L-methionine.

This sequence belongs to the RNA methyltransferase TrmD family. In terms of assembly, homodimer.

It is found in the cytoplasm. The catalysed reaction is guanosine(37) in tRNA + S-adenosyl-L-methionine = N(1)-methylguanosine(37) in tRNA + S-adenosyl-L-homocysteine + H(+). Its function is as follows. Specifically methylates guanosine-37 in various tRNAs. The protein is tRNA (guanine-N(1)-)-methyltransferase of Rhodospirillum rubrum (strain ATCC 11170 / ATH 1.1.1 / DSM 467 / LMG 4362 / NCIMB 8255 / S1).